Consider the following 877-residue polypeptide: DNA (cytosine-5)-methyltransferase 3A (877 aa).

Disordered regions lie at residues 1–154, 194–250, and 412–431; these read MVES…MQRH, EETP…PEYE, and AYAPPPPAKKPRKSTTEKPK. Basic and acidic residues-rich tracts occupy residues 107–133 and 195–206; these read KLLEATEKSKEEKEENNFDSLKMEGSR and ETPRAEPQKEEE. Residues 210 to 225 are compositionally biased toward polar residues; the sequence is PASQQPTDPASPNVAT. One can recognise a PWWP domain in the interval 226-284; that stretch reads TPEPVVADAVDKNTSKSADDEPEYEDGRGLGIGELVWGKLRGFSWWPGRIVSWWMTGRS. Basic and acidic residues predominate over residues 234–244; it reads AVDKNTSKSAD. In terms of domain architecture, ADD spans 447–579; the sequence is EVRQKCRNIE…LQMFFANNHD (133 aa). Residues 458-488 form a GATA-type; atypical zinc finger; that stretch reads ICISCGSLNVTLEHPLFIGGMCQNCKNCFLE. The PHD-type; atypical zinc-finger motif lies at 499–555; it reads QSYCTICCGGREVLMCGNNNCCRCFCVECVDLLVGPGAAQAAIKEDPWNCYMCGHKG. The region spanning 599-877 is the SAM-dependent MTase C5-type domain; that stretch reads IRVLSLFDGI…APLKEYFACV (279 aa). Residues 606–610, Glu629, and 651–653 each bind S-adenosyl-L-methionine; these read DGIAT and DVR. Cys675 is a catalytic residue. 856 to 858 is a binding site for S-adenosyl-L-methionine; it reads RSW.

This sequence belongs to the class I-like SAM-binding methyltransferase superfamily. C5-methyltransferase family.

The protein resides in the nucleus. It is found in the chromosome. The protein localises to the cytoplasm. It catalyses the reaction a 2'-deoxycytidine in DNA + S-adenosyl-L-methionine = a 5-methyl-2'-deoxycytidine in DNA + S-adenosyl-L-homocysteine + H(+). The catalysed reaction is L-cysteinyl-[protein] + S-adenosyl-L-methionine = S-methyl-L-cysteinyl-[protein] + S-adenosyl-L-homocysteine + H(+). Required for genome-wide de novo methylation and is essential for development. DNA methylation is coordinated with methylation of histones. It modifies DNA in a non-processive manner and also methylates non-CpG sites. Acts as a transcriptional corepressor for ZNF238. Can actively repress transcription through the recruitment of HDAC activity. Also has weak auto-methylation activity on some Cys residue in absence of DNA. The sequence is that of DNA (cytosine-5)-methyltransferase 3A (DNMT3A) from Gallus gallus (Chicken).